The chain runs to 357 residues: Probable leucine aminopeptidase TRV_02148.1 (357 aa).

Residues 1-15 (MKVLAALALSALAMA) form the signal peptide. A glycan (N-linked (GlcNAc...) asparagine) is linked at Asn-76. Positions 167 and 185 each coordinate Zn(2+). Residues 169 to 188 (DSINGKNPQGEAPGADDNGS) form a disordered region. Asn-186 carries N-linked (GlcNAc...) asparagine glycosylation. Zn(2+)-binding residues include Glu-224 and Asp-251. Asn-269 carries N-linked (GlcNAc...) asparagine glycosylation. Cysteines 291 and 295 form a disulfide. His-324 serves as a coordination point for Zn(2+).

Belongs to the peptidase M28 family. M28E subfamily. As to quaternary structure, monomer. Zn(2+) is required as a cofactor.

It is found in the secreted. Functionally, probable extracellular aminopeptidase which contributes to pathogenicity. The chain is Probable leucine aminopeptidase TRV_02148.1 from Trichophyton verrucosum (strain HKI 0517).